We begin with the raw amino-acid sequence, 186 residues long: MADFLIQPMVLWALRIFLALLFVAAALSKLRHVEEFYGVVRNFRVLPDLASRVVALVLPVVEAAVAVGLVVTPLAVPAAVAAAALLLVFAAALAINVLRGRTQIDCGCFRNGLKQPVSWLLVLRNLVLTALALAIATGLPAAVPASLTEGATGLLAGATAMLIYLSASLLGGLSAAQTANKTAKGR.

Helical transmembrane passes span Phe-4–Ala-24, Val-53–Pro-73, Ala-75–Ile-95, Val-127–Leu-147, and Gly-153–Leu-173.

The protein localises to the cell membrane. Its pathway is one-carbon metabolism; methylamine degradation. May be specifically involved in the processing, transport, and/or maturation of the MADH beta-subunit. This is Methylamine utilization protein MauE (mauE) from Paracoccus denitrificans.